Consider the following 190-residue polypeptide: Recombination protein RecR (190 aa).

Residues 58–73 (CEQCGALSENELCEIC) form a C4-type zinc finger. One can recognise a Toprim domain in the interval 81-167 (NILCIVESPK…TFSKIAQGIP (87 aa)).

This sequence belongs to the RecR family.

Functionally, may play a role in DNA repair. It seems to be involved in an RecBC-independent recombinational process of DNA repair. It may act with RecF and RecO. This Campylobacter jejuni subsp. jejuni serotype O:23/36 (strain 81-176) protein is Recombination protein RecR.